The sequence spans 447 residues: UPF0328 protein ECU10_1870 (447 aa).

Basic and acidic residues-rich tracts occupy residues 1 to 10 (MPSDHPDFRS) and 64 to 84 (HTEG…HTET). 2 disordered regions span residues 1–103 (MPSD…TATP) and 147–173 (VKSQ…NPRI). A compositionally biased stretch (pro residues) spans 92-103 (CPPPHPGPTATP).

This sequence belongs to the UPF0328 family.

The sequence is that of UPF0328 protein ECU10_1870 from Encephalitozoon cuniculi (strain GB-M1) (Microsporidian parasite).